The sequence spans 336 residues: Dihydroorotate dehydrogenase (quinone) (336 aa).

FMN contacts are provided by residues 62–66 (AGMDK) and threonine 86. Lysine 66 contacts substrate. 111 to 115 (NRMGF) contributes to the substrate binding site. Residues asparagine 139 and asparagine 172 each contribute to the FMN site. Asparagine 172 serves as a coordination point for substrate. Residue serine 175 is the Nucleophile of the active site. Asparagine 177 provides a ligand contact to substrate. Lysine 217 and threonine 245 together coordinate FMN. Residue 246–247 (NT) participates in substrate binding. FMN is bound by residues glycine 268, glycine 297, and 318 to 319 (YS).

Belongs to the dihydroorotate dehydrogenase family. Type 2 subfamily. Monomer. FMN is required as a cofactor.

It is found in the cell membrane. It catalyses the reaction (S)-dihydroorotate + a quinone = orotate + a quinol. Its pathway is pyrimidine metabolism; UMP biosynthesis via de novo pathway; orotate from (S)-dihydroorotate (quinone route): step 1/1. Functionally, catalyzes the conversion of dihydroorotate to orotate with quinone as electron acceptor. This chain is Dihydroorotate dehydrogenase (quinone), found in Buchnera aphidicola subsp. Schizaphis graminum (strain Sg).